Reading from the N-terminus, the 417-residue chain is Type II methyltransferase M.Eco47II (417 aa).

The SAM-dependent MTase C5-type domain maps to 81-414 (YTVLELFAGA…KSVVHLLDKI (334 aa)). The active site involves cysteine 153.

This sequence belongs to the class I-like SAM-binding methyltransferase superfamily. C5-methyltransferase family.

The enzyme catalyses a 2'-deoxycytidine in DNA + S-adenosyl-L-methionine = a 5-methyl-2'-deoxycytidine in DNA + S-adenosyl-L-homocysteine + H(+). A methylase that recognizes the double-stranded sequence 5'-GGNCC-3', methylates C-? on both strands, and protects the DNA from cleavage by both the Eco47I and Eco47II endonucleases. This Escherichia coli protein is Type II methyltransferase M.Eco47II.